The following is a 329-amino-acid chain: tRNA pseudouridine synthase B (329 aa).

Asp-42 (nucleophile) is an active-site residue.

Belongs to the pseudouridine synthase TruB family. Type 1 subfamily.

The enzyme catalyses uridine(55) in tRNA = pseudouridine(55) in tRNA. Functionally, responsible for synthesis of pseudouridine from uracil-55 in the psi GC loop of transfer RNAs. The polypeptide is tRNA pseudouridine synthase B (Lactococcus lactis subsp. lactis (strain IL1403) (Streptococcus lactis)).